Here is a 319-residue protein sequence, read N- to C-terminus: Pectinesterase (319 aa).

Gln1 carries the pyrrolidone carboxylic acid modification. Substrate contacts are provided by Thr83 and Gln113. Asp136 acts as the Proton donor in catalysis. A disulfide bridge links Cys150 with Cys170. The Nucleophile role is filled by Asp157. Positions 225 and 227 each coordinate substrate.

The protein belongs to the pectinesterase family.

It localises to the secreted. The protein localises to the cell wall. It catalyses the reaction [(1-&gt;4)-alpha-D-galacturonosyl methyl ester](n) + n H2O = [(1-&gt;4)-alpha-D-galacturonosyl](n) + n methanol + n H(+). Its pathway is glycan metabolism; pectin degradation; 2-dehydro-3-deoxy-D-gluconate from pectin: step 1/5. Catalyzes the deesterification of methyl-esterified D-galactosiduronic acid units in pectic compounds. It participates in modulating cell wall during fruit ripening, cell wall extension during pollen germination, and in defense mechanisms against pathogens. This Daucus carota (Wild carrot) protein is Pectinesterase.